The chain runs to 196 residues: Probable malonic semialdehyde reductase RutE (196 aa).

It belongs to the nitroreductase family. HadB/RutE subfamily. It depends on FMN as a cofactor.

It catalyses the reaction 3-hydroxypropanoate + NADP(+) = 3-oxopropanoate + NADPH + H(+). May reduce toxic product malonic semialdehyde to 3-hydroxypropionic acid, which is excreted. In Yersinia enterocolitica serotype O:8 / biotype 1B (strain NCTC 13174 / 8081), this protein is Probable malonic semialdehyde reductase RutE.